The chain runs to 389 residues: Succinate--CoA ligase [ADP-forming] subunit beta (389 aa).

The 236-residue stretch at 9–244 (KEIFRSMGVA…LDEEDPKEIE (236 aa)) folds into the ATP-grasp domain. Residues lysine 46, 53–55 (GRG), glutamate 99, cysteine 102, and glutamate 107 each bind ATP. 2 residues coordinate Mg(2+): asparagine 199 and aspartate 213. Residues asparagine 264 and 321-323 (GIM) contribute to the substrate site.

It belongs to the succinate/malate CoA ligase beta subunit family. In terms of assembly, heterotetramer of two alpha and two beta subunits. Mg(2+) serves as cofactor.

The enzyme catalyses succinate + ATP + CoA = succinyl-CoA + ADP + phosphate. It carries out the reaction GTP + succinate + CoA = succinyl-CoA + GDP + phosphate. Its pathway is carbohydrate metabolism; tricarboxylic acid cycle; succinate from succinyl-CoA (ligase route): step 1/1. Succinyl-CoA synthetase functions in the citric acid cycle (TCA), coupling the hydrolysis of succinyl-CoA to the synthesis of either ATP or GTP and thus represents the only step of substrate-level phosphorylation in the TCA. The beta subunit provides nucleotide specificity of the enzyme and binds the substrate succinate, while the binding sites for coenzyme A and phosphate are found in the alpha subunit. The chain is Succinate--CoA ligase [ADP-forming] subunit beta from Macrococcus caseolyticus (strain JCSC5402) (Macrococcoides caseolyticum).